The primary structure comprises 146 residues: Angiogenin (146 aa).

Residues 1–24 (MVMGLGLFLLVFMLGLGLTSPTLA) form the signal peptide. Position 25 is a pyrrolidone carboxylic acid (Gln25). His37 (proton acceptor) is an active-site residue. Arg45 provides a ligand contact to tRNA. 3 disulfides stabilise this stretch: Cys50–Cys105, Cys63–Cys116, and Cys81–Cys131. The short motif at 55–59 (RRQGM) is the Nucleolar localization signal element. Cys105 and Ile127 together coordinate tRNA. The active-site Proton donor is the His138.

This sequence belongs to the pancreatic ribonuclease family. As to quaternary structure, homodimer. Interacts with RNH1; inhibiting ANG ribonuclease activity. Interacts with PCNA.

The protein resides in the secreted. The protein localises to the nucleus. Its subcellular location is the nucleolus. It localises to the cytoplasm. It is found in the stress granule. Its activity is regulated as follows. Has weak tRNA ribonuclease activity by itself due to partial autoinhibition by its C-terminus, which folds into a short alpha-helix that partially occludes the substrate-binding site. In absence of stress, the ribonuclease activity is inhibited by RNH1 in the cytoplasm. In response to stress, dissociates from RNH1 in the cytoplasm and associates with cytoplasmic ribosomes with vacant A-sites: ribosomes directly activate the tRNA ribonuclease activity of ANG by refolding the C-terminal alpha-helix. In response to stress, the angiogenic activity of ANG is inhibited by RNH1 in the nucleus. Secreted ribonuclease that can either promote or restrict cell proliferation of target cells, depending on the context. Endocytosed in target cells via its receptor PLXNB2 and translocates to the cytoplasm or nucleus. Under stress conditions, localizes to the cytoplasm and promotes the assembly of stress granules (SGs): specifically cleaves a subset of tRNAs within anticodon loops to produce tRNA-derived stress-induced fragments (tiRNAs), resulting in translation repression and inhibition of cell proliferation. tiRNas also prevent formation of apoptosome, thereby promoting cell survival. Preferentially cleaves RNAs between a pyrimidine and an adenosine residue, suggesting that it cleaves the anticodon loop of tRNA(Ala) (32-UUAGCAU-38) after positions 33 and 36. Cleaves a subset of tRNAs, including tRNA(Ala), tRNA(Glu), tRNA(Gly), tRNA(Lys), tRNA(Val), tRNA(His), tRNA(Asp) and tRNA(Sec). Under growth conditions and in differentiated cells, translocates to the nucleus and stimulates ribosomal RNA (rRNA) transcription, including that containing the initiation site sequences of 45S rRNA, thereby promoting cell growth and proliferation. Angiogenin induces vascularization of normal and malignant tissues via its ability to promote rRNA transcription. Involved in hematopoietic stem and progenitor cell (HSPC) growth and survival by promoting rRNA transcription in growth conditions and inhibiting translation in response to stress, respectively. Mediates the crosstalk between myeloid and intestinal epithelial cells to protect the intestinal epithelial barrier integrity: secreted by myeloid cells and promotes intestinal epithelial cells proliferation and survival. Also mediates osteoclast-endothelial cell crosstalk in growing bone: produced by osteoclasts and protects the neighboring vascular cells against senescence by promoting rRNA transcription. The chain is Angiogenin (ANG) from Miopithecus talapoin (Angolan talapoin).